The sequence spans 407 residues: Elongation factor Tu, chloroplastic (407 aa).

Residues 10-212 (KPHVNIGTIG…SVDNYIPAPE (203 aa)) form the tr-type G domain. A G1 region spans residues 19–26 (GHVDHGKT). Residue 19 to 26 (GHVDHGKT) participates in GTP binding. Threonine 26 is a Mg(2+) binding site. Residues 59-63 (GITIN) are G2. A G3 region spans residues 80 to 83 (DCPG). GTP contacts are provided by residues 80–84 (DCPGH) and 135–138 (NKAD). The G4 stretch occupies residues 135 to 138 (NKAD). The tract at residues 173-175 (SAL) is G5.

Belongs to the TRAFAC class translation factor GTPase superfamily. Classic translation factor GTPase family. EF-Tu/EF-1A subfamily.

The protein localises to the plastid. The protein resides in the chloroplast. The enzyme catalyses GTP + H2O = GDP + phosphate + H(+). In terms of biological role, GTP hydrolase that promotes the GTP-dependent binding of aminoacyl-tRNA to the A-site of ribosomes during protein biosynthesis. This is Elongation factor Tu, chloroplastic (tufA) from Emiliania huxleyi (Coccolithophore).